The following is a 160-amino-acid chain: Transcriptional repressor NrdR (160 aa).

Residues 3–34 (CPSCQNTDSRVLESRAADGGRSVRRRRECLNC) fold into a zinc finger. One can recognise an ATP-cone domain in the interval 49–139 (ITVIKRNGNR…VYRQFRGIDD (91 aa)).

It belongs to the NrdR family. Zn(2+) is required as a cofactor.

Functionally, negatively regulates transcription of bacterial ribonucleotide reductase nrd genes and operons by binding to NrdR-boxes. The polypeptide is Transcriptional repressor NrdR (Synechococcus sp. (strain CC9605)).